The sequence spans 780 residues: Zinc finger and SCAN domain-containing protein 10 (780 aa).

Residues 1–38 (MLGESVPAAVEQEQLGEVKLEEEEAVSPEDPRRPESRL) are disordered. Basic and acidic residues predominate over residues 29 to 38 (EDPRRPESRL). Positions 56 to 126 (MGPRASLSRL…LLLEGIHREP (71 aa)) constitute an SCAN box domain. Disordered regions lie at residues 153–237 (GCAS…SRDQ) and 255–324 (KAWP…GSLL). Residues Ser-162 and Ser-208 each carry the phosphoserine modification. Over residues 202-224 (SSKQPLSPGPQKTFQALQESSPQ) the composition is skewed to polar residues. Thr-268 is modified (phosphothreonine). Basic and acidic residues predominate over residues 268-280 (TPDKEEFKQEEPK). C2H2-type zinc fingers lie at residues 347 to 370 (FICADCGVSFPQLSRLKAHQLRSH), 376 to 398 (FLCLCCGKSFGRSSILKLHMRTH), 404 to 426 (HACHLCGHRFRQSSHLSKHLLTH), 432 to 454 (FLCAECGRGFQRRASLVQHLLAH), 476 to 498 (VLCSHCGQSFQRRSSLKRHLRIH), 522 to 544 (FVCSDCGKAFRRSEHLVAHRRVH), 550 to 572 (FSCQACGRSFTQSSQLVSHQRVH), 578 to 600 (YACPQCGKRFVRRASLARHLLTH), 606 to 628 (HHCTQCGKSFGQTQDLARHQRSH), 634 to 656 (CRCSECGEGFSQSAHLARHQRIH), 662 to 684 (HACDTCGHRFRNSSNLARHRRSH), 690 to 712 (YSCQTCGRSFRRNAHLRRHLATH), 724 to 746 (QECVECGKSFSRSCNLLRHLLVH), and 752 to 774 (YSCTQCGRSFSRNSHLLRHLRTH). Gln-483 bears the N5-methylglutamine mark. A disordered region spans residues 492–520 (KRHLRIHARDKDRRSSEGSGSRRRDSDRR). The span at 498–520 (HARDKDRRSSEGSGSRRRDSDRR) shows a compositional bias: basic and acidic residues.

In terms of assembly, interacts with POU5F1/OCT4 and SOX2. Methylated at Gln-483 by N6AMT1.

The protein localises to the nucleus. In terms of biological role, embryonic stem (ES) cell-specific transcription factor required to maintain ES cell pluripotency. Can both activate and /or repress expression of target genes, depending on the context. Specifically binds the 5'-[GA]CGCNNGCG[CT]-3' DNA consensus sequence. Regulates expression of POU5F1/OCT4, ZSCAN4 and ALYREF/THOC4. The protein is Zinc finger and SCAN domain-containing protein 10 (ZSCAN10) of Homo sapiens (Human).